We begin with the raw amino-acid sequence, 89 residues long: MMNDNNERKPLRTIKGLVISNKMQKTVTVLVERQIKHALYGKYIKRSTKLHAHDADDLCNEGDVVLMTEVAPISKTKNWRVVEIVARSD.

The protein belongs to the universal ribosomal protein uS17 family. Part of the 30S ribosomal subunit.

Functionally, one of the primary rRNA binding proteins, it binds specifically to the 5'-end of 16S ribosomal RNA. The polypeptide is Small ribosomal subunit protein uS17 (Xylella fastidiosa (strain Temecula1 / ATCC 700964)).